We begin with the raw amino-acid sequence, 200 residues long: Holliday junction branch migration complex subunit RuvA (200 aa).

The interval 1-65 is domain I; that stretch reads MYEYIKGTLT…ETEHVLYGFS (65 aa). Residues 66–144 form a domain II region; that stretch reads SRAERECFRL…TLMPLYLEEP (79 aa). Residues 145 to 149 are flexible linker; sequence VVPSS. Residues 150 to 200 form a domain III region; the sequence is TANSSFKEGIGALMNLGFSRLAADRMMTEAVKELSEEASVAELLPIALRKS.

Belongs to the RuvA family. Homotetramer. Forms an RuvA(8)-RuvB(12)-Holliday junction (HJ) complex. HJ DNA is sandwiched between 2 RuvA tetramers; dsDNA enters through RuvA and exits via RuvB. An RuvB hexamer assembles on each DNA strand where it exits the tetramer. Each RuvB hexamer is contacted by two RuvA subunits (via domain III) on 2 adjacent RuvB subunits; this complex drives branch migration. In the full resolvosome a probable DNA-RuvA(4)-RuvB(12)-RuvC(2) complex forms which resolves the HJ.

The protein resides in the cytoplasm. In terms of biological role, the RuvA-RuvB-RuvC complex processes Holliday junction (HJ) DNA during genetic recombination and DNA repair, while the RuvA-RuvB complex plays an important role in the rescue of blocked DNA replication forks via replication fork reversal (RFR). RuvA specifically binds to HJ cruciform DNA, conferring on it an open structure. The RuvB hexamer acts as an ATP-dependent pump, pulling dsDNA into and through the RuvAB complex. HJ branch migration allows RuvC to scan DNA until it finds its consensus sequence, where it cleaves and resolves the cruciform DNA. The chain is Holliday junction branch migration complex subunit RuvA from Chlamydia trachomatis serovar L2 (strain ATCC VR-902B / DSM 19102 / 434/Bu).